The following is a 379-amino-acid chain: MAAAAPPVLRGLRDAAMVGPCRGGGEPPGWATNKLGGRADALPSVRPGCPRCGACGAALAHLVQVYCPLGASPFHRLANVFACAESACWGRPQSWKVLRSQSLEARGQDALGCGSKQKEECNFSAKDWCAEADDWGGCDGTESSTCALQMLGLNAGMSSSASEEAQCVSQLQELHLSEAADVSGSLNTDLLLREEMVMATSAPVFHSYYISVVDEADYAGFLDTDHANKLLKEYQQREGVDLEHLMSESFAGEDSNEKYEKTKVRSGDHTFHKFMKRISVCPEQILRYSWGGQPLFITCPPANFDNSIPACSNCGSNRVFEFQLMPALVSMLWGDADLSVEFGTVIVYTCERSCWPTNQQTPLEEFIFVQEDPDQKLFK.

The sequence is that of Programmed cell death protein 2-like (PDCD2L) from Gallus gallus (Chicken).